The chain runs to 317 residues: MANKKLAFQDIILTLQGFWSKQGANLMQAYDNEVGAGTMSPYTFLRSNGPEPWGAAYVQPSRRPADGRYGENPNRLFQHHQFQVVLKPSPKNIQELYLQSLAALGIDALEHDIRFVEDNWENPSMGCAGIGWEVWIDGQECTQFTYFQQVGGIEVDSVTSEITYGLERIATVIQEVDSVYDLEWGNGVAYGDIFKEPEYEHSKFAFEESNQELLLKLFGEYEQEALDLLDKGLVHPAYDYILKSSHTFNLLDARGAVSVTERAGYMHRVRTMARKVAKTFIEERAKLGFPLLKDEALREKYLGKKGKYTKIVEGEEK.

The protein belongs to the class-II aminoacyl-tRNA synthetase family. In terms of assembly, tetramer of two alpha and two beta subunits.

It localises to the cytoplasm. The catalysed reaction is tRNA(Gly) + glycine + ATP = glycyl-tRNA(Gly) + AMP + diphosphate. This Lactococcus lactis subsp. cremoris (strain SK11) protein is Glycine--tRNA ligase alpha subunit.